The sequence spans 109 residues: Large ribosomal subunit protein uL24 (109 aa).

Belongs to the universal ribosomal protein uL24 family. In terms of assembly, part of the 50S ribosomal subunit.

Its function is as follows. One of two assembly initiator proteins, it binds directly to the 5'-end of the 23S rRNA, where it nucleates assembly of the 50S subunit. One of the proteins that surrounds the polypeptide exit tunnel on the outside of the subunit. The sequence is that of Large ribosomal subunit protein uL24 from Rickettsia akari (strain Hartford).